Consider the following 488-residue polypeptide: Adenylosuccinate synthetase 1, chloroplastic (488 aa).

A chloroplast-targeting transit peptide spans 1-47; it reads MSLSTVNHAAAAAAAAAGPGKSFSAAAPAAPSVRLPRTRAPAAAAVS. GTP-binding positions include 75–81 and 103–105; these read GDEGKGK and GHT. D76 functions as the Proton acceptor in the catalytic mechanism. Mg(2+) is bound by residues D76 and G103. Residues 76 to 79, 101 to 104, T193, R207, Q287, T302, and R366 contribute to the IMP site; these read DEGK and NAGH. H104 functions as the Proton donor in the catalytic mechanism. 362–368 provides a ligand contact to substrate; it reads TTTGRPR. GTP is bound by residues R368, 394-396, and 477-479; these read KLD and GVG.

Belongs to the adenylosuccinate synthetase family. As to quaternary structure, homodimer. It depends on Mg(2+) as a cofactor.

Its subcellular location is the plastid. It localises to the chloroplast. It catalyses the reaction IMP + L-aspartate + GTP = N(6)-(1,2-dicarboxyethyl)-AMP + GDP + phosphate + 2 H(+). The protein operates within purine metabolism; AMP biosynthesis via de novo pathway; AMP from IMP: step 1/2. In terms of biological role, plays an important role in the de novo pathway and in the salvage pathway of purine nucleotide biosynthesis. Catalyzes the first committed step in the biosynthesis of AMP from IMP. The chain is Adenylosuccinate synthetase 1, chloroplastic from Oryza sativa subsp. japonica (Rice).